Here is a 140-residue protein sequence, read N- to C-terminus: Large ribosomal subunit protein bL17 (140 aa).

It belongs to the bacterial ribosomal protein bL17 family. As to quaternary structure, part of the 50S ribosomal subunit. Contacts protein L32.

The sequence is that of Large ribosomal subunit protein bL17 from Ruegeria pomeroyi (strain ATCC 700808 / DSM 15171 / DSS-3) (Silicibacter pomeroyi).